The sequence spans 1023 residues: Exportin-T (1023 aa).

It belongs to the exportin family.

It localises to the nucleus. The protein localises to the cytoplasm. Its function is as follows. tRNA nucleus export receptor which facilitates tRNA translocation across the nuclear pore complex. Involved in pre-tRNA splicing, probably by affecting the interaction of pre-tRNA with splicing endonuclease. The polypeptide is Exportin-T (los1) (Sclerotinia sclerotiorum (strain ATCC 18683 / 1980 / Ss-1) (White mold)).